The sequence spans 178 residues: Large ribosomal subunit protein uL6 (178 aa).

This sequence belongs to the universal ribosomal protein uL6 family. As to quaternary structure, part of the 50S ribosomal subunit.

Functionally, this protein binds to the 23S rRNA, and is important in its secondary structure. It is located near the subunit interface in the base of the L7/L12 stalk, and near the tRNA binding site of the peptidyltransferase center. The protein is Large ribosomal subunit protein uL6 of Maridesulfovibrio salexigens (strain ATCC 14822 / DSM 2638 / NCIMB 8403 / VKM B-1763) (Desulfovibrio salexigens).